A 464-amino-acid polypeptide reads, in one-letter code: ATP-dependent protease ATPase subunit HslU (464 aa).

ATP is bound by residues V18, 60–65 (GVGKTE), D277, E342, and R414.

Belongs to the ClpX chaperone family. HslU subfamily. A double ring-shaped homohexamer of HslV is capped on each side by a ring-shaped HslU homohexamer. The assembly of the HslU/HslV complex is dependent on binding of ATP.

The protein resides in the cytoplasm. Functionally, ATPase subunit of a proteasome-like degradation complex; this subunit has chaperone activity. The binding of ATP and its subsequent hydrolysis by HslU are essential for unfolding of protein substrates subsequently hydrolyzed by HslV. HslU recognizes the N-terminal part of its protein substrates and unfolds these before they are guided to HslV for hydrolysis. This Lactobacillus leichmannii protein is ATP-dependent protease ATPase subunit HslU.